Reading from the N-terminus, the 185-residue chain is Ribosome-recycling factor (185 aa).

Residues 135-159 (ANDKLKASEKNKEASEDEVKRAQEK) are disordered.

This sequence belongs to the RRF family.

The protein resides in the cytoplasm. Its function is as follows. Responsible for the release of ribosomes from messenger RNA at the termination of protein biosynthesis. May increase the efficiency of translation by recycling ribosomes from one round of translation to another. This chain is Ribosome-recycling factor, found in Moorella thermoacetica (strain ATCC 39073 / JCM 9320).